Consider the following 117-residue polypeptide: Modulator protein MzrA (117 aa).

At 1-9 the chain is on the cytoplasmic side; that stretch reads MNSPGLRKP. The chain crosses the membrane as a helical span at residues 10–29; the sequence is TIWRPLLLLFPLLALLLSMS. The Periplasmic segment spans residues 30–117; sequence SPRLPDEVML…THGTIRVARS (88 aa).

Belongs to the MzrA family. In terms of assembly, interacts with EnvZ.

It localises to the cell inner membrane. Modulates the activity of the EnvZ/OmpR two-component regulatory system, probably by directly modulating EnvZ enzymatic activity and increasing stability of phosphorylated OmpR. The chain is Modulator protein MzrA from Dickeya zeae (strain Ech586) (Dickeya dadantii (strain Ech586)).